The primary structure comprises 491 residues: Sucrose transport protein SUC7 (491 aa).

A compositionally biased stretch (basic and acidic residues) spans 1–13 (MSDLQANKDETTV). The segment at 1–25 (MSDLQANKDETTVDRQSSSSVDLDG) is disordered. The Cytoplasmic portion of the chain corresponds to 1–32 (MSDLQANKDETTVDRQSSSSVDLDGPSPLRKM). A Phosphoserine modification is found at S17. Residues 33 to 53 (ISVASIAAGIQFGWALQLSLL) form a helical membrane-spanning segment. Over 54–67 (TPYVQLLGVPHKWP) the chain is Extracellular. Residues 68-88 (SFIWLCGPVSGLLVQPSVGYF) traverse the membrane as a helical segment. The Cytoplasmic segment spans residues 89-100 (SDRCTSRFGRRR). Residues 101 to 121 (PFIATGALLVAVSVVLIGYAA) form a helical membrane-spanning segment. The Extracellular segment spans residues 122–138 (DFGHSMGDKIDKPVKMR). The helical transmembrane segment at 139 to 159 (AVVIFALGFWILDVANNTLQG) threads the bilayer. The Cytoplasmic segment spans residues 160 to 180 (PCRAFLGDLAAGDAQKTRTAN). Residues 181 to 201 (AFFSFFMAVGNVLGYAAGSYT) traverse the membrane as a helical segment. Residues 202-223 (NLYKIFPFTMTKACDIYCANLK) lie on the Extracellular side of the membrane. Residues 224–244 (SCFFLSITLLLVVTIIALWYV) form a helical membrane-spanning segment. At 245–276 (EDKQWSPKADSDNEKTPFFGEIFGAFKVMKRP) the chain is on the cytoplasmic side. Residues 277-297 (MWMLLIVTALNWIAWFPFLLY) traverse the membrane as a helical segment. Over 298–323 (DTDWMGREVYGGDSKGDDKMKKLYNQ) the chain is Extracellular. The helical transmembrane segment at 324–344 (GIHVGALGLMLNSIVLGVMSL) threads the bilayer. Over 345 to 358 (GIEGISRKMGGAKR) the chain is Cytoplasmic. A helical transmembrane segment spans residues 359 to 379 (LWGAVNIILAVCLAMTVLVTK). The Extracellular portion of the chain corresponds to 380-402 (KAEEHRRIAGPMALPTDGIRAGA). Residues 403–423 (LTLFALLGIPLAITFSIPFAL) form a helical membrane-spanning segment. Residues 424 to 443 (ASIISSSSGAGQRLSLGVLN) lie on the Cytoplasmic side of the membrane. The chain crosses the membrane as a helical span at residues 444 to 464 (MAIVIPQMIVSFGVGPIDALF). Over 465–468 (GDGN) the chain is Extracellular. The helical transmembrane segment at 469-489 (LPGFVVGAIAAAVSSIVAFTV) threads the bilayer. Topologically, residues 490–491 (LP) are cytoplasmic.

This sequence belongs to the glycoside-pentoside-hexuronide (GPH) cation symporter transporter (TC 2.A.2.4) family. Expressed in anthers.

The protein localises to the cell membrane. It functions in the pathway glycan biosynthesis; sucrose metabolism. In terms of biological role, may be responsible for the transport of glucosides into the cell, with the concomitant uptake of protons (symport system). Does not seem to transport sucrose. This is Sucrose transport protein SUC7 from Arabidopsis thaliana (Mouse-ear cress).